The sequence spans 341 residues: Phospholipid phosphatase homolog 1.2 homolog (341 aa).

3 helical membrane-spanning segments follow: residues Leu30–Val50, Ile71–Val91, and Leu122–Val142. N-linked (GlcNAc...) asparagine glycosylation occurs at Asn162. A run of 2 helical transmembrane segments spans residues Arg223 to Ser243 and Val257 to Phe277. 2 disordered regions span residues Ser284–Arg308 and Phe322–Ala341. Over residues Arg299–Arg308 the composition is skewed to basic and acidic residues.

It belongs to the PA-phosphatase related phosphoesterase family.

The protein localises to the membrane. In Caenorhabditis elegans, this protein is Phospholipid phosphatase homolog 1.2 homolog.